The primary structure comprises 894 residues: Alpha-actinin-2 (894 aa).

Residues 1 to 254 (MNQIEPGVQY…IMTYVSCFYH (254 aa)) form an actin-binding region. Calponin-homology (CH) domains follow at residues 38–142 (KQQR…LRFA) and 151–257 (TSAK…HAFA). Position 237 is a phosphothreonine (Thr237). 4 Spectrin repeats span residues 281-391 (RLME…WLLN), 401-506 (HLAE…ALER), 516-627 (QLHL…SLQE), and 637-740 (RLRR…EVET). EF-hand domains lie at 753-788 (EQMN…MGYD) and 789-824 (LGEA…ETAD). The Ca(2+) site is built by Asp766, Asn770, Asp777, Asp802, Asn804, and Thr808.

Belongs to the alpha-actinin family. As to quaternary structure, homodimer; antiparallel. Also forms heterodimers with ACTN3. Interacts with ADAM12, MYOZ1, MYOZ2 and MYOZ3. Interacts via its C-terminal region with the LDB3 PDZ domain. Interacts with XIRP2. Interacts with DST (via N-terminus). Interacts with PARVB. Interacts with SYNPO2. Ubiquitinated by FBXL22, leading to proteasomal degradation.

The protein resides in the cytoplasm. Its subcellular location is the myofibril. It is found in the sarcomere. The protein localises to the z line. F-actin cross-linking protein which is thought to anchor actin to a variety of intracellular structures. This is a bundling protein. The chain is Alpha-actinin-2 (Actn2) from Mus musculus (Mouse).